Here is a 77-residue protein sequence, read N- to C-terminus: Large ribosomal subunit protein bL28 (77 aa).

This sequence belongs to the bacterial ribosomal protein bL28 family.

The polypeptide is Large ribosomal subunit protein bL28 (Albidiferax ferrireducens (strain ATCC BAA-621 / DSM 15236 / T118) (Rhodoferax ferrireducens)).